The chain runs to 163 residues: S-ribosylhomocysteine lyase (163 aa).

Residues His54, His58, and Cys128 each contribute to the Fe cation site.

This sequence belongs to the LuxS family. In terms of assembly, homodimer. It depends on Fe cation as a cofactor.

The enzyme catalyses S-(5-deoxy-D-ribos-5-yl)-L-homocysteine = (S)-4,5-dihydroxypentane-2,3-dione + L-homocysteine. Involved in the synthesis of autoinducer 2 (AI-2) which is secreted by bacteria and is used to communicate both the cell density and the metabolic potential of the environment. The regulation of gene expression in response to changes in cell density is called quorum sensing. Catalyzes the transformation of S-ribosylhomocysteine (RHC) to homocysteine (HC) and 4,5-dihydroxy-2,3-pentadione (DPD). This Wolinella succinogenes (strain ATCC 29543 / DSM 1740 / CCUG 13145 / JCM 31913 / LMG 7466 / NCTC 11488 / FDC 602W) (Vibrio succinogenes) protein is S-ribosylhomocysteine lyase.